A 304-amino-acid polypeptide reads, in one-letter code: Nod factor export ATP-binding protein I (304 aa).

One can recognise an ABC transporter domain in the interval Ile-6–Phe-236. Gly-38–Ser-45 serves as a coordination point for ATP.

It belongs to the ABC transporter superfamily. Lipooligosaccharide exporter (TC 3.A.1.102) family. As to quaternary structure, the complex is composed of two ATP-binding proteins (NodI) and two transmembrane proteins (NodJ).

The protein resides in the cell inner membrane. Part of the ABC transporter complex NodIJ involved in the export of the nodulation factors (Nod factors), the bacterial signal molecules that induce symbiosis and subsequent nodulation induction. Nod factors are LCO (lipo-chitin oligosaccharide), a modified beta-1,4-linked N-acetylglucosamine oligosaccharide. This subunit is responsible for energy coupling to the transport system. The protein is Nod factor export ATP-binding protein I of Rhizobium sp. (strain N33).